The sequence spans 856 residues: Alginate lyase 7 (856 aa).

PbH1 repeat units lie at residues 133 to 155, 157 to 179, 180 to 202, 204 to 226, 234 to 256, 257 to 279, 280 to 304, and 320 to 342; these read DYNV…DPHE, TINL…VADF, QIGA…NIVT, SHDI…VVQR, VYNV…LIKM, STDV…RVQG, VEDV…EVIV, and TQNV…GIQE. 9 Hemolysin-type calcium-binding repeats span residues 387–402, 404–421, 422–439, 538–549, 554–563, 565–581, 582–599, 715–731, and 733–749; these read GSTG…IADL, VGGS…NDVL, EGGA…ADIF, GTEGDDSLTGNA, LDGGSGNDSL, GGLG…DDIL, NGGL…ADIF, GGAG…DDIL, and GGSE…ADVF.

The protein belongs to the D-mannuronate C5-epimerase family. Ca(2+) serves as cofactor.

The protein resides in the secreted. It catalyses the reaction Eliminative cleavage of alginate to give oligosaccharides with 4-deoxy-alpha-L-erythro-hex-4-enuronosyl groups at their non-reducing ends and beta-D-mannuronate at their reducing end.. It carries out the reaction [(1-&gt;4)-beta-D-mannuronosyl](n) = [alginate](n). It functions in the pathway glycan biosynthesis; alginate biosynthesis. Its activity is regulated as follows. Inhibited by zinc. Its function is as follows. Converts beta-D-mannuronic acid (M) to alpha-L-guluronic acid (G). Has both epimerase and lyase activities. Contributes to abortive encystment by degrading the coat from inside the cyst. Important for cyst germination. The chain is Alginate lyase 7 from Azotobacter vinelandii.